The chain runs to 368 residues: Putative flavoprotein monooxygenase (368 aa).

Residues A14, E34, S41, 52–53 (IT), V110, A307, and I319 each bind FAD.

FAD is required as a cofactor.

In terms of biological role, FAD-binding protein that may have monooxygenase activity using NADPH and/or NADH as an electron donor. The sequence is that of Putative flavoprotein monooxygenase from Staphylococcus aureus (strain Mu50 / ATCC 700699).